Consider the following 252-residue polypeptide: uncharacterized protein (252 aa).

A helical transmembrane segment spans residues 80 to 100 (LSVLVIGSTMFTHAGVLPVLA).

It localises to the host membrane. Its subcellular location is the virion. This is an uncharacterized protein from Acanthamoeba polyphaga mimivirus (APMV).